The chain runs to 650 residues: Phosphatidylinositol-3,5-bisphosphate 3-phosphatase MTMR14 (650 aa).

A disordered region spans residues 1–27 (MAGARAAAAAASAGSSASSGNQPPQEL). The residue at position 194 (Lys-194) is an N6-acetyllysine. The N-linked (GlcNAc...) asparagine glycan is linked to Asn-226. Catalysis depends on Cys-330, which acts as the Phosphocysteine intermediate. A 1,2-diacyl-sn-glycero-3-phospho-(1D-myo-inositol-3,5-bisphosphate) is bound by residues Gly-333, Trp-334, Asp-335, Arg-336, and Arg-382. A 1,2-diacyl-sn-glycero-3-phospho-(1D-myo-inositol-3-phosphate) is bound by residues Gly-333, Trp-334, Asp-335, Arg-336, and Arg-382. The disordered stretch occupies residues 476–546 (AAWRKSHSSS…PRSVDHPLPG (71 aa)). Ser-518 is subject to Phosphoserine. N-linked (GlcNAc...) asparagine glycosylation occurs at Asn-519. Phosphoserine occurs at positions 530, 580, and 624. Omega-N-methylarginine is present on Arg-638.

The protein belongs to the protein-tyrosine phosphatase family. Non-receptor class myotubularin subfamily. Expressed in various tissues, including heart, skeletal muscle, placenta, liver, lung, kidney and pancreas.

The protein localises to the cytoplasm. The catalysed reaction is a 1,2-diacyl-sn-glycero-3-phospho-(1D-myo-inositol-3,5-bisphosphate) + H2O = a 1,2-diacyl-sn-glycero-3-phospho-(1D-myo-inositol-5-phosphate) + phosphate. The enzyme catalyses a 1,2-diacyl-sn-glycero-3-phospho-(1D-myo-inositol-3-phosphate) + H2O = a 1,2-diacyl-sn-glycero-3-phospho-(1D-myo-inositol) + phosphate. In terms of biological role, lipid phosphatase that specifically dephosphorylates the D-3 position of phosphatidylinositol 3-phosphate and phosphatidylinositol 3,5-bisphosphate, generating phosphatidylinositol and phosphatidylinositol 5-phosphate. The protein is Phosphatidylinositol-3,5-bisphosphate 3-phosphatase MTMR14 of Homo sapiens (Human).